The following is a 62-amino-acid chain: Photosystem II reaction center protein Z (62 aa).

2 helical membrane passes run 8–28 and 41–61; these read SVFALVAISFLLVVGVPVVLA and FSGASLWIALVFLVGVLNSFI.

It belongs to the PsbZ family. In terms of assembly, PSII is composed of 1 copy each of membrane proteins PsbA, PsbB, PsbC, PsbD, PsbE, PsbF, PsbH, PsbI, PsbJ, PsbK, PsbL, PsbM, PsbT, PsbY, PsbZ, Psb30/Ycf12, at least 3 peripheral proteins of the oxygen-evolving complex and a large number of cofactors. It forms dimeric complexes.

The protein resides in the plastid. It is found in the chloroplast thylakoid membrane. In terms of biological role, may control the interaction of photosystem II (PSII) cores with the light-harvesting antenna, regulates electron flow through the 2 photosystem reaction centers. PSII is a light-driven water plastoquinone oxidoreductase, using light energy to abstract electrons from H(2)O, generating a proton gradient subsequently used for ATP formation. This is Photosystem II reaction center protein Z from Chaetosphaeridium globosum (Charophycean green alga).